The primary structure comprises 181 residues: Alkyl hydroperoxide reductase AhpD (181 aa).

Catalysis depends on Cys-131, which acts as the Proton donor. Cys-131 and Cys-134 are joined by a disulfide. Catalysis depends on Cys-134, which acts as the Cysteine sulfenic acid (-SOH) intermediate.

The protein belongs to the AhpD family.

The enzyme catalyses N(6)-[(R)-dihydrolipoyl]-L-lysyl-[lipoyl-carrier protein] + a hydroperoxide = N(6)-[(R)-lipoyl]-L-lysyl-[lipoyl-carrier protein] + an alcohol + H2O. Its function is as follows. Antioxidant protein with alkyl hydroperoxidase activity. Required for the reduction of the AhpC active site cysteine residues and for the regeneration of the AhpC enzyme activity. The polypeptide is Alkyl hydroperoxide reductase AhpD (Bradyrhizobium sp. (strain ORS 278)).